Here is a 160-residue protein sequence, read N- to C-terminus: Small ribosomal subunit protein bS6 (160 aa).

A disordered region spans residues 96-160 (RKVKRFIPRA…PRTRKVSKEQ (65 aa)). Residues 126-145 (TTDASKTEASTEATASKQSE) show a composition bias toward low complexity. A compositionally biased stretch (basic residues) spans 151–160 (PRTRKVSKEQ).

Belongs to the bacterial ribosomal protein bS6 family.

In terms of biological role, binds together with bS18 to 16S ribosomal RNA. In Metamycoplasma arthritidis (strain 158L3-1) (Mycoplasma arthritidis), this protein is Small ribosomal subunit protein bS6.